A 156-amino-acid polypeptide reads, in one-letter code: uncharacterized protein (156 aa).

This is an uncharacterized protein from Saccharomyces cerevisiae (strain ATCC 204508 / S288c) (Baker's yeast).